Consider the following 429-residue polypeptide: Septin-11 (429 aa).

The residue at position 2 (Ala2) is an N-acetylalanine. A Phosphoserine modification is found at Ser9. One can recognise a Septin-type G domain in the interval 38-304 (QGFCFNILCV…ELYRRCKLEE (267 aa)). The interval 48–55 (GETGIGKS) is G1 motif. GTP is bound by residues 48-55 (GETGIGKS), Gly103, 184-192 (KADTIAKNE), Gly238, and Arg253. The segment at 100–103 (DTVG) is G3 motif. Residues 183–186 (AKAD) form a G4 motif region. Residues 320–415 (QETYEAKRNE…QSQAQQSGAQ (96 aa)) are a coiled coil. The tract at residues 398 to 429 (KKAAAQLLQSQAQQSGAQQTKKDKDKKNASFT) is disordered. Over residues 401-416 (AAQLLQSQAQQSGAQQ) the composition is skewed to low complexity. Over residues 417 to 429 (TKKDKDKKNASFT) the composition is skewed to basic and acidic residues.

The protein belongs to the TRAFAC class TrmE-Era-EngA-EngB-Septin-like GTPase superfamily. Septin GTPase family. In terms of assembly, septins polymerize into heterooligomeric protein complexes that form filaments, and can associate with cellular membranes, actin filaments and microtubules. Forms homooligomers. GTPase activity is required for filament formation. Interacts with SEPTIN7, SEPTIN9 and SEPTIN12. As to expression, widely expressed, except in leukocytes.

It localises to the cytoplasm. The protein resides in the cytoskeleton. It is found in the synapse. Its subcellular location is the cell projection. The protein localises to the dendritic spine. It localises to the axon. In terms of biological role, filament-forming cytoskeletal GTPase. May play a role in cytokinesis (Potential). May play a role in the cytoarchitecture of neurons, including dendritic arborization and dendritic spines, and in GABAergic synaptic connectivity. During Listeria monocytogenes infection, not required for the bacterial entry process, but restricts its efficacy. This Homo sapiens (Human) protein is Septin-11.